The chain runs to 206 residues: Large ribosomal subunit protein uL4 (206 aa).

Belongs to the universal ribosomal protein uL4 family. As to quaternary structure, part of the 50S ribosomal subunit.

Functionally, one of the primary rRNA binding proteins, this protein initially binds near the 5'-end of the 23S rRNA. It is important during the early stages of 50S assembly. It makes multiple contacts with different domains of the 23S rRNA in the assembled 50S subunit and ribosome. Forms part of the polypeptide exit tunnel. This Rhodopseudomonas palustris (strain BisB18) protein is Large ribosomal subunit protein uL4.